The following is a 165-amino-acid chain: Protein SprT (165 aa).

The SprT-like domain occupies Glu20–Val163. Zn(2+) is bound at residue His78. Glu79 is a catalytic residue. His82 contacts Zn(2+).

The protein belongs to the SprT family. The cofactor is Zn(2+).

It localises to the cytoplasm. The chain is Protein SprT from Shigella sonnei (strain Ss046).